An 837-amino-acid chain; its full sequence is Ribosome-releasing factor 2, mitochondrial (837 aa).

The N-terminal 29 residues, Met-1–Leu-29, are a transit peptide targeting the mitochondrion. The tr-type G domain occupies Leu-40 to Leu-331. Residues Ala-49–Thr-56, Asp-113–His-117, and Asn-167–Asp-170 each bind GTP. A disordered region spans residues Ile-338–Ser-359. Basic residues predominate over residues Val-345–Ser-355.

The protein belongs to the TRAFAC class translation factor GTPase superfamily. Classic translation factor GTPase family. EF-G/EF-2 subfamily.

The protein localises to the mitochondrion. Its function is as follows. Mitochondrial GTPase that mediates the disassembly of ribosomes from messenger RNA at the termination of mitochondrial protein biosynthesis. Not involved in the GTP-dependent ribosomal translocation step during translation elongation. The sequence is that of Ribosome-releasing factor 2, mitochondrial from Meyerozyma guilliermondii (strain ATCC 6260 / CBS 566 / DSM 6381 / JCM 1539 / NBRC 10279 / NRRL Y-324) (Yeast).